A 152-amino-acid polypeptide reads, in one-letter code: MSEKYIVTWDRLQIHARKLASRLMPSEQWKGIIAVSRGGLVPGALLARELGIRHVDTVCISSYDHDNQRELKVLKRAEGDGEGFIVIDDLVDTGGTAVAIREMYPKAHFVTIFAKPAGRPLVDDYVVDIPQDTWIEQPWDMGVVFVPPISGR.

Residues 37–38 (RG), R69, and 88–96 (DDLVDTGGT) contribute to the 5-phospho-alpha-D-ribose 1-diphosphate site. R69 contacts GMP. D89 serves as a coordination point for Mg(2+). The guanine site is built by D92 and I135. Residues D92 and I135 each contribute to the xanthine site. GMP is bound by residues 92-96 (DTGGT) and 134-135 (WI).

This sequence belongs to the purine/pyrimidine phosphoribosyltransferase family. XGPT subfamily. In terms of assembly, homotetramer. Mg(2+) serves as cofactor.

Its subcellular location is the cell inner membrane. It carries out the reaction GMP + diphosphate = guanine + 5-phospho-alpha-D-ribose 1-diphosphate. The enzyme catalyses XMP + diphosphate = xanthine + 5-phospho-alpha-D-ribose 1-diphosphate. It catalyses the reaction IMP + diphosphate = hypoxanthine + 5-phospho-alpha-D-ribose 1-diphosphate. The protein operates within purine metabolism; GMP biosynthesis via salvage pathway; GMP from guanine: step 1/1. It functions in the pathway purine metabolism; XMP biosynthesis via salvage pathway; XMP from xanthine: step 1/1. Its function is as follows. Purine salvage pathway enzyme that catalyzes the transfer of the ribosyl-5-phosphate group from 5-phospho-alpha-D-ribose 1-diphosphate (PRPP) to the N9 position of the 6-oxopurines guanine and xanthine to form the corresponding ribonucleotides GMP (guanosine 5'-monophosphate) and XMP (xanthosine 5'-monophosphate), with the release of PPi. To a lesser extent, also acts on hypoxanthine. This Escherichia coli O7:K1 (strain IAI39 / ExPEC) protein is Xanthine-guanine phosphoribosyltransferase.